The chain runs to 900 residues: Chaperone protein ClpB 2 (900 aa).

The Clp R domain occupies 15-154 (PDRFSDPAWE…ESLLRQPSVS (140 aa)). Repeat regions lie at residues 18–81 (FSDP…LADQ) and 91–154 (IGED…PSVS). The segment at 151–183 (PSVSPAPAPPPVPTAASAPAPTPRSAPAPRVMA) is disordered. Pro residues predominate over residues 154–163 (SPAPAPPPVP). An NBD1 region spans residues 191 to 376 (ELEREPSALE…RRFQQVLIRE (186 aa)). 244-251 (GEPGVGKT) serves as a coordination point for ATP. The linker stretch occupies residues 377 to 581 (PDLELSLEIL…IADLVARWTG (205 aa)). Residues 427-557 (IDLIDEAAAQ…LEASQAEAQS (131 aa)) are a coiled coil. Positions 591–803 (ERRKLLALES…RIDEVIRFRP (213 aa)) are NBD2. Residue 641–648 (GPTGVGKT) participates in ATP binding. The tract at residues 804–900 (LKVKDLVRIV…GASLEFEPLE (97 aa)) is C-terminal.

It belongs to the ClpA/ClpB family. In terms of assembly, homohexamer. The oligomerization is ATP-dependent.

Its subcellular location is the cytoplasm. Its function is as follows. Part of a stress-induced multi-chaperone system, it is involved in the recovery of the cell from heat-induced damage, in cooperation with DnaK, DnaJ and GrpE. Acts before DnaK, in the processing of protein aggregates. Protein binding stimulates the ATPase activity; ATP hydrolysis unfolds the denatured protein aggregates, which probably helps expose new hydrophobic binding sites on the surface of ClpB-bound aggregates, contributing to the solubilization and refolding of denatured protein aggregates by DnaK. The chain is Chaperone protein ClpB 2 (clpB2) from Parasynechococcus marenigrum (strain WH8102).